The following is a 746-amino-acid chain: MAAVQHRATTRTSNTDNSTTKTKSKATSARKSPATKRKRVSAETARAAAALKGLAVEAPAPSIEANEPGQFGRINVMDITPAEERGIFPARVELGEPFEMTAQVFIEGRTKVGATAIVRNPRGKETMRRAMTCVNPGLDRWTVMVKCGEHSDLKPWEDGYAAVKRQLGEWTVTIEGWEDAYVSWLHDARIKVRVMDDVDNALNSGAELLARWAETPDTGLTARDRKTLEKAAETMADQTLSAEDRLAAGDNPTIAALHETHPLRDGISPSQPQRFKVERPKSSFAAWYQFFPRSEGATIDPNTGKIIQGTLKTSMAGLERAAAEGFDIVYLPPVFPIGVTNRKGRNNTLVAGPDDPGSPFGIGSELGGHDTVDPLLGTMDDFKALCQRAHELGLEIALDFALQCSPDHPWVKAHPNWFRHKPDGSIAFAENPPKKYQDIYPIDFNADMPGIEKEVERIMNLWIEAGVTIFRIDNPHTKPVRFWQDVIAAVTKKHPEILFLAEAFTRPGMMRALSYVGFTQSHCYFPWRNTKDELEEYLPVTNGDDGYYQHNTFWPTTPDILTAYVRDNGVAGHCVRAVLAAMGSPSWGIYNGYELIENKQRPGFEEQIDNEKYEVKVRDWSKAKQYGVAEMLTALNKIRRAHPAALSYHNLTVLPTSDPNILAFARHTPAELTGTGQADTLIVVVNLDGHNAHQSMIHLELSELGLPTDRPLNVRDELTGREFQWGWDNYVSLAPWADVAHILSVQ.

A disordered region spans residues 1–43 (MAAVQHRATTRTSNTDNSTTKTKSKATSARKSPATKRKRVSAE). The span at 10-32 (TRTSNTDNSTTKTKSKATSARKS) shows a compositional bias: low complexity. Alpha-maltose 1-phosphate contacts are provided by Lys343, Gln403, and Asp438. Residue Asp473 is the Nucleophile of the active site. Residue Asn474 participates in alpha-maltose 1-phosphate binding. The active-site Proton donor is the Glu502. 612 to 613 (KY) contacts alpha-maltose 1-phosphate.

Belongs to the glycosyl hydrolase 13 family. GlgE subfamily. Homodimer.

The enzyme catalyses alpha-maltose 1-phosphate + [(1-&gt;4)-alpha-D-glucosyl](n) = [(1-&gt;4)-alpha-D-glucosyl](n+2) + phosphate. Functionally, maltosyltransferase that uses maltose 1-phosphate (M1P) as the sugar donor to elongate linear or branched alpha-(1-&gt;4)-glucans. Is involved in a branched alpha-glucan biosynthetic pathway from trehalose, together with TreS, Mak and GlgB. This chain is Alpha-1,4-glucan:maltose-1-phosphate maltosyltransferase, found in Bifidobacterium longum (strain NCC 2705).